A 169-amino-acid chain; its full sequence is Probable RNA-binding protein EIF1AD (169 aa).

The region spanning 14-89 (VLGDYVQPTE…VKAEIAFILY (76 aa)) is the S1-like domain. The segment at 115–169 (AKEKESSGIQSTEAQAKPQGEDSETDDDSGLFVNTNHVHYEDSEEESESEEDEEN) is disordered. Acidic residues predominate over residues 156 to 169 (DSEEESESEEDEEN).

This sequence belongs to the EIF1AD family.

It localises to the nucleus. Functionally, may play a role into cellular response to oxidative stress. May decrease cell proliferation. The polypeptide is Probable RNA-binding protein EIF1AD (eif1ad) (Xenopus laevis (African clawed frog)).